Here is a 122-residue protein sequence, read N- to C-terminus: Probable DNA-directed RNA polymerase II subunit RPB11 (122 aa).

Belongs to the archaeal Rpo11/eukaryotic RPB11/RPC19 RNA polymerase subunit family. As to quaternary structure, component of the RNA polymerase II (Pol II) complex consisting of 12 subunits.

It is found in the nucleus. Functionally, DNA-dependent RNA polymerase catalyzes the transcription of DNA into RNA using the four ribonucleoside triphosphates as substrates. Component of RNA polymerase II which synthesizes mRNA precursors and many functional non-coding RNAs. Pol II is the central component of the basal RNA polymerase II transcription machinery. It is composed of mobile elements that move relative to each other. RPB11 is part of the core element with the central large cleft. This is Probable DNA-directed RNA polymerase II subunit RPB11 (rpb-11) from Caenorhabditis elegans.